We begin with the raw amino-acid sequence, 259 residues long: Adenosylcobinamide-GDP ribazoletransferase (259 aa).

7 helical membrane passes run 41-61 (AAIW…AIVF), 67-87 (FGLA…IATG), 119-139 (IGAY…NVLS), 148-168 (LFAL…FMHL), 179-199 (AGAG…GAIP), 200-220 (LLLL…LLFA), and 237-257 (TIGA…SVAL).

This sequence belongs to the CobS family. The cofactor is Mg(2+).

It localises to the cell inner membrane. It catalyses the reaction alpha-ribazole + adenosylcob(III)inamide-GDP = adenosylcob(III)alamin + GMP + H(+). The catalysed reaction is alpha-ribazole 5'-phosphate + adenosylcob(III)inamide-GDP = adenosylcob(III)alamin 5'-phosphate + GMP + H(+). It participates in cofactor biosynthesis; adenosylcobalamin biosynthesis; adenosylcobalamin from cob(II)yrinate a,c-diamide: step 7/7. Functionally, joins adenosylcobinamide-GDP and alpha-ribazole to generate adenosylcobalamin (Ado-cobalamin). Also synthesizes adenosylcobalamin 5'-phosphate from adenosylcobinamide-GDP and alpha-ribazole 5'-phosphate. The protein is Adenosylcobinamide-GDP ribazoletransferase of Mesorhizobium japonicum (strain LMG 29417 / CECT 9101 / MAFF 303099) (Mesorhizobium loti (strain MAFF 303099)).